Here is a 37-residue protein sequence, read N- to C-terminus: Large ribosomal subunit protein bL36 (37 aa).

This sequence belongs to the bacterial ribosomal protein bL36 family.

The polypeptide is Large ribosomal subunit protein bL36 (Koribacter versatilis (strain Ellin345)).